The following is a 368-amino-acid chain: D-Ala-D/L-Ala epimerase (368 aa).

Substrate-binding positions include T135 and 160–162; that span reads KVK. Mg(2+) is bound by residues D190, E216, and D241. Substrate is bound by residues K265 and 318-320; that span reads DFD.

This sequence belongs to the mandelate racemase/muconate lactonizing enzyme family. Mg(2+) serves as cofactor.

Its function is as follows. Catalyzes the epimerization of D-Ala-D-Ala to D-Ala-L-Ala. Has broad substrate specificity and catalyzes the epimerization of a variety of dipeptides containing an N-terminal Ala followed by a hydrophobic or polar residue, such as Val, Ser and Met (in vitro). In Cytophaga hutchinsonii (strain ATCC 33406 / DSM 1761 / CIP 103989 / NBRC 15051 / NCIMB 9469 / D465), this protein is D-Ala-D/L-Ala epimerase (tfdD).